Here is a 375-residue protein sequence, read N- to C-terminus: Queuine tRNA-ribosyltransferase (375 aa).

The active-site Proton acceptor is the Asp89. Substrate is bound by residues 89–93 (DSGGF), Asp143, Gln187, and Gly214. The interval 245–251 (GVGKPED) is RNA binding. Asp264 (nucleophile) is an active-site residue. The RNA binding; important for wobble base 34 recognition stretch occupies residues 269 to 273 (TRNAR). Zn(2+) contacts are provided by Cys302, Cys304, Cys307, and His333.

Belongs to the queuine tRNA-ribosyltransferase family. In terms of assembly, homodimer. Within each dimer, one monomer is responsible for RNA recognition and catalysis, while the other monomer binds to the replacement base PreQ1. Zn(2+) is required as a cofactor.

It carries out the reaction 7-aminomethyl-7-carbaguanine + guanosine(34) in tRNA = 7-aminomethyl-7-carbaguanosine(34) in tRNA + guanine. Its pathway is tRNA modification; tRNA-queuosine biosynthesis. Catalyzes the base-exchange of a guanine (G) residue with the queuine precursor 7-aminomethyl-7-deazaguanine (PreQ1) at position 34 (anticodon wobble position) in tRNAs with GU(N) anticodons (tRNA-Asp, -Asn, -His and -Tyr). Catalysis occurs through a double-displacement mechanism. The nucleophile active site attacks the C1' of nucleotide 34 to detach the guanine base from the RNA, forming a covalent enzyme-RNA intermediate. The proton acceptor active site deprotonates the incoming PreQ1, allowing a nucleophilic attack on the C1' of the ribose to form the product. After dissociation, two additional enzymatic reactions on the tRNA convert PreQ1 to queuine (Q), resulting in the hypermodified nucleoside queuosine (7-(((4,5-cis-dihydroxy-2-cyclopenten-1-yl)amino)methyl)-7-deazaguanosine). The polypeptide is Queuine tRNA-ribosyltransferase (Salmonella enteritidis PT4 (strain P125109)).